A 395-amino-acid polypeptide reads, in one-letter code: MTLPVNPVDNLAALIRCPSVTPAEGGALTALEKMLKLMGFSANRPVFSDDNTPDIENLYARKSGNGPHLMFAGHTDVVPPGDEKDWKHPPFAAAIEDGVMYGRGAVDMKGGIACFVAAVARHIEKHGNIKGSISFLITGDEEGPAVNGTVKLLEWAKQRGESWDASIVGEPTNPNALGDMIKIGRRGSLSGTITVHGVQGHAAYPHLAENPVRGIVTLVDSLLCPAFDEGTANFQASNLEVTTIDVGNKATNVIPNKATASFNIRFNDTWTAESLQAEIISRLERAARDNRLRQGRETPIKYELTWRERPSHVFLTHDEKLIGTLTASVEAVTGKRPELSTSGGTSDARFIKDYCPVVEFGLTGQTMHMVDERVALADLEGLTQIYERFIADFFG.

Position 74 (His74) interacts with Zn(2+). Asp76 is a catalytic residue. Asp107 lines the Zn(2+) pocket. Glu141 (proton acceptor) is an active-site residue. Residues Glu142, Glu170, and His368 each coordinate Zn(2+).

Belongs to the peptidase M20A family. DapE subfamily. In terms of assembly, homodimer. It depends on Zn(2+) as a cofactor. Co(2+) serves as cofactor.

The enzyme catalyses N-succinyl-(2S,6S)-2,6-diaminopimelate + H2O = (2S,6S)-2,6-diaminopimelate + succinate. It functions in the pathway amino-acid biosynthesis; L-lysine biosynthesis via DAP pathway; LL-2,6-diaminopimelate from (S)-tetrahydrodipicolinate (succinylase route): step 3/3. In terms of biological role, catalyzes the hydrolysis of N-succinyl-L,L-diaminopimelic acid (SDAP), forming succinate and LL-2,6-diaminopimelate (DAP), an intermediate involved in the bacterial biosynthesis of lysine and meso-diaminopimelic acid, an essential component of bacterial cell walls. The sequence is that of Succinyl-diaminopimelate desuccinylase from Brucella melitensis biotype 1 (strain ATCC 23456 / CCUG 17765 / NCTC 10094 / 16M).